Here is a 637-residue protein sequence, read N- to C-terminus: Rab11 family-interacting protein 4 (637 aa).

The 36-residue stretch at 49-84 folds into the EF-hand domain; the sequence is GQGEEVEKLVKYLDPNDLGRINFKDFCRGVFAMKGC. Ca(2+) contacts are provided by Asp62, Asn64, Arg68, and Asp73. The segment at 82 to 637 is necessary for interaction with RAB11A, subcellular location, homo- or heterooligomerization; that stretch reads KGCEELLKDV…HNPSILEIKH (556 aa). 2 disordered regions span residues 138 to 175 and 219 to 256; these read EEEA…PAEK and YGEG…SAGQ. A coiled-coil region spans residues 280–617; sequence KINLLNDLEA…EEINFRLRQY (338 aa). Residues 574–636 enclose the FIP-RBD domain; sequence EAKNLFAAQT…DHNPSILEIK (63 aa).

As to quaternary structure, homodimer. Forms a complex with Rab11 (RAB11A or RAB11B) and ARF6. Interacts with RAB11A; the interaction is direct. Forms a heterooligomeric complex with RAB11FIP2, RAB11FIP3 and RAB11FIP5. Interacts with ECPAS. (Microbial infection) Interacts with human cytomegalovirus/HHV-5 protein gM/UL100. As to expression, present at high level in testis (at protein level). Weakly expressed in other tissues.

The protein resides in the endosome. The protein localises to the cytoplasm. It localises to the cytoskeleton. Its subcellular location is the spindle. It is found in the microtubule organizing center. The protein resides in the centrosome. The protein localises to the recycling endosome membrane. It localises to the cleavage furrow. Its subcellular location is the midbody. It is found in the cytoplasmic vesicle. Functionally, acts as a regulator of endocytic traffic by participating in membrane delivery. Required for the abscission step in cytokinesis, possibly by acting as an 'address tag' delivering recycling endosome membranes to the cleavage furrow during late cytokinesis. In case of infection by HCMV (human cytomegalovirus), may participate in egress of the virus out of nucleus; this function is independent of ARF6. This is Rab11 family-interacting protein 4 (RAB11FIP4) from Homo sapiens (Human).